The sequence spans 596 residues: Succinate dehydrogenase flavoprotein subunit (596 aa).

Residues 18–23 (GAGGAG), 41–56 (TKLFPTRSHTVAAQGG), and Asp225 each bind FAD. Residue His49 is modified to Tele-8alpha-FAD histidine. Residues His246 and Thr258 each contribute to the substrate site. Arg290 functions as the Proton acceptor in the catalytic mechanism. Position 357 (His357) interacts with substrate. Glu391 contacts FAD. Residue Arg402 participates in substrate binding. An FAD-binding site is contributed by 407–408 (SL).

It belongs to the FAD-dependent oxidoreductase 2 family. FRD/SDH subfamily. In terms of assembly, part of an enzyme complex containing four subunits: a flavoprotein, an iron-sulfur, cytochrome b-556, and a hydrophobic anchor protein. FAD is required as a cofactor.

It localises to the cell inner membrane. It catalyses the reaction a quinone + succinate = fumarate + a quinol. The protein operates within carbohydrate metabolism; tricarboxylic acid cycle; fumarate from succinate (bacterial route): step 1/1. This Rickettsia conorii (strain ATCC VR-613 / Malish 7) protein is Succinate dehydrogenase flavoprotein subunit (sdhA).